The following is a 238-amino-acid chain: MSRNSRGSGRYVFVVLACVFGYTRAVHAEVYTDPSTSGHVTISIPIWAFVEPQPGVMTQQAESPRTPPPQTLRELGAFVLGGAVYGWRFSYTPKEKKRAVMEHFTLTPIFPLPPDSPQISLRHVRTPYPYIHCRAEYSLDARHATHMRQSRNLTYQRAQGRGRGERKEELKGVYHAYHRAIVDALRKTVRKTQKNKPKEVEGMLYVKDNPRLFVEAGEFVAELSLSVHFTKITPYSVY.

Residues 1 to 28 form the signal peptide; sequence MSRNSRGSGRYVFVVLACVFGYTRAVHA.

This is an uncharacterized protein from Treponema pallidum (strain Nichols).